A 359-amino-acid polypeptide reads, in one-letter code: Holliday junction branch migration complex subunit RuvB (359 aa).

The interval 1-187 (MSGLEHGDAS…FGFTAHLEFY (187 aa)) is large ATPase domain (RuvB-L). ATP contacts are provided by residues Leu26, Arg27, Gly68, Lys71, Thr72, Thr73, 134-136 (EDY), Arg177, Tyr187, and Arg224. A Mg(2+)-binding site is contributed by Thr72. The small ATPAse domain (RuvB-S) stretch occupies residues 188-257 (ETHELEQVIE…SVRAALDLYD (70 aa)). Residues 260 to 359 (PLGLDRLDRA…VAGALFGDEL (100 aa)) form a head domain (RuvB-H) region. DNA is bound by residues Arg315 and Arg320.

Belongs to the RuvB family. As to quaternary structure, homohexamer. Forms an RuvA(8)-RuvB(12)-Holliday junction (HJ) complex. HJ DNA is sandwiched between 2 RuvA tetramers; dsDNA enters through RuvA and exits via RuvB. An RuvB hexamer assembles on each DNA strand where it exits the tetramer. Each RuvB hexamer is contacted by two RuvA subunits (via domain III) on 2 adjacent RuvB subunits; this complex drives branch migration. In the full resolvosome a probable DNA-RuvA(4)-RuvB(12)-RuvC(2) complex forms which resolves the HJ.

Its subcellular location is the cytoplasm. It carries out the reaction ATP + H2O = ADP + phosphate + H(+). Its function is as follows. The RuvA-RuvB-RuvC complex processes Holliday junction (HJ) DNA during genetic recombination and DNA repair, while the RuvA-RuvB complex plays an important role in the rescue of blocked DNA replication forks via replication fork reversal (RFR). RuvA specifically binds to HJ cruciform DNA, conferring on it an open structure. The RuvB hexamer acts as an ATP-dependent pump, pulling dsDNA into and through the RuvAB complex. RuvB forms 2 homohexamers on either side of HJ DNA bound by 1 or 2 RuvA tetramers; 4 subunits per hexamer contact DNA at a time. Coordinated motions by a converter formed by DNA-disengaged RuvB subunits stimulates ATP hydrolysis and nucleotide exchange. Immobilization of the converter enables RuvB to convert the ATP-contained energy into a lever motion, pulling 2 nucleotides of DNA out of the RuvA tetramer per ATP hydrolyzed, thus driving DNA branch migration. The RuvB motors rotate together with the DNA substrate, which together with the progressing nucleotide cycle form the mechanistic basis for DNA recombination by continuous HJ branch migration. Branch migration allows RuvC to scan DNA until it finds its consensus sequence, where it cleaves and resolves cruciform DNA. The protein is Holliday junction branch migration complex subunit RuvB of Clavibacter michiganensis subsp. michiganensis (strain NCPPB 382).